A 629-amino-acid polypeptide reads, in one-letter code: tRNA uridine 5-carboxymethylaminomethyl modification enzyme MnmG (629 aa).

FAD is bound by residues Gly-13–Gly-18, Val-125, and Ser-180. Position 273-287 (Gly-273–Phe-287) interacts with NAD(+). Residue Gln-370 coordinates FAD.

It belongs to the MnmG family. As to quaternary structure, homodimer. Heterotetramer of two MnmE and two MnmG subunits. FAD serves as cofactor.

The protein resides in the cytoplasm. In terms of biological role, NAD-binding protein involved in the addition of a carboxymethylaminomethyl (cmnm) group at the wobble position (U34) of certain tRNAs, forming tRNA-cmnm(5)s(2)U34. The sequence is that of tRNA uridine 5-carboxymethylaminomethyl modification enzyme MnmG from Photobacterium profundum (strain SS9).